The chain runs to 424 residues: Gamma-glutamyl phosphate reductase (424 aa).

Belongs to the gamma-glutamyl phosphate reductase family.

Its subcellular location is the cytoplasm. The enzyme catalyses L-glutamate 5-semialdehyde + phosphate + NADP(+) = L-glutamyl 5-phosphate + NADPH + H(+). It participates in amino-acid biosynthesis; L-proline biosynthesis; L-glutamate 5-semialdehyde from L-glutamate: step 2/2. In terms of biological role, catalyzes the NADPH-dependent reduction of L-glutamate 5-phosphate into L-glutamate 5-semialdehyde and phosphate. The product spontaneously undergoes cyclization to form 1-pyrroline-5-carboxylate. This chain is Gamma-glutamyl phosphate reductase, found in Parvibaculum lavamentivorans (strain DS-1 / DSM 13023 / NCIMB 13966).